Here is a 97-residue protein sequence, read N- to C-terminus: Aspartyl/glutamyl-tRNA(Asn/Gln) amidotransferase subunit C (97 aa).

Belongs to the GatC family. Heterotrimer of A, B and C subunits.

It carries out the reaction L-glutamyl-tRNA(Gln) + L-glutamine + ATP + H2O = L-glutaminyl-tRNA(Gln) + L-glutamate + ADP + phosphate + H(+). It catalyses the reaction L-aspartyl-tRNA(Asn) + L-glutamine + ATP + H2O = L-asparaginyl-tRNA(Asn) + L-glutamate + ADP + phosphate + 2 H(+). In terms of biological role, allows the formation of correctly charged Asn-tRNA(Asn) or Gln-tRNA(Gln) through the transamidation of misacylated Asp-tRNA(Asn) or Glu-tRNA(Gln) in organisms which lack either or both of asparaginyl-tRNA or glutaminyl-tRNA synthetases. The reaction takes place in the presence of glutamine and ATP through an activated phospho-Asp-tRNA(Asn) or phospho-Glu-tRNA(Gln). This chain is Aspartyl/glutamyl-tRNA(Asn/Gln) amidotransferase subunit C, found in Picosynechococcus sp. (strain ATCC 27264 / PCC 7002 / PR-6) (Agmenellum quadruplicatum).